A 103-amino-acid chain; its full sequence is Small ribosomal subunit protein uS10 (103 aa).

This sequence belongs to the universal ribosomal protein uS10 family. Part of the 30S ribosomal subunit.

Its function is as follows. Involved in the binding of tRNA to the ribosomes. The protein is Small ribosomal subunit protein uS10 of Psychromonas ingrahamii (strain DSM 17664 / CCUG 51855 / 37).